The chain runs to 238 residues: Uridylate kinase (238 aa).

Position 12–15 (12–15 (KLSG)) interacts with ATP. Residues 20–25 (GEKGFG) form an involved in allosteric activation by GTP region. A UMP-binding site is contributed by Gly54. Positions 55 and 59 each coordinate ATP. UMP is bound by residues Asp72 and 133 to 140 (TGNPYFST). ATP contacts are provided by Tyr166 and Asp169.

Belongs to the UMP kinase family. In terms of assembly, homohexamer.

It localises to the cytoplasm. The enzyme catalyses UMP + ATP = UDP + ADP. Its pathway is pyrimidine metabolism; CTP biosynthesis via de novo pathway; UDP from UMP (UMPK route): step 1/1. Its activity is regulated as follows. Allosterically activated by GTP. Inhibited by UTP. Catalyzes the reversible phosphorylation of UMP to UDP. The protein is Uridylate kinase of Clostridium botulinum (strain Hall / ATCC 3502 / NCTC 13319 / Type A).